A 765-amino-acid polypeptide reads, in one-letter code: Probable dipeptidyl peptidase 4 (765 aa).

The N-terminal stretch at 1–14 (MKWSILLLVGCAAA) is a signal peptide. N-linked (GlcNAc...) asparagine glycans are attached at residues N35, N78, N101, N110, N169, N218, N465, and N490. The active-site Charge relay system is S613. N-linked (GlcNAc...) asparagine glycosylation is present at N665. Active-site charge relay system residues include D690 and H725.

It belongs to the peptidase S9B family.

Its subcellular location is the secreted. It catalyses the reaction Release of an N-terminal dipeptide, Xaa-Yaa-|-Zaa-, from a polypeptide, preferentially when Yaa is Pro, provided Zaa is neither Pro nor hydroxyproline.. Its function is as follows. Extracellular dipeptidyl-peptidase which removes N-terminal dipeptides sequentially from polypeptides having unsubstituted N-termini provided that the penultimate residue is proline. The protein is Probable dipeptidyl peptidase 4 (dpp4) of Neosartorya fischeri (strain ATCC 1020 / DSM 3700 / CBS 544.65 / FGSC A1164 / JCM 1740 / NRRL 181 / WB 181) (Aspergillus fischerianus).